We begin with the raw amino-acid sequence, 317 residues long: Peptidyl-prolyl cis-trans isomerase CYP26-2, chloroplastic (317 aa).

The interval methionine 1–leucine 37 is disordered. One can recognise a PPIase cyclophilin-type domain in the interval phenylalanine 95 to leucine 311.

This sequence belongs to the cyclophilin-type PPIase family. As to expression, ubiquitous. Lower levels of expression in roots.

Its subcellular location is the plastid. It is found in the chloroplast thylakoid. It catalyses the reaction [protein]-peptidylproline (omega=180) = [protein]-peptidylproline (omega=0). Functionally, PPIases accelerate the folding of proteins. It catalyzes the cis-trans isomerization of proline imidic peptide bonds in oligopeptides. The protein is Peptidyl-prolyl cis-trans isomerase CYP26-2, chloroplastic (CYP26-2) of Arabidopsis thaliana (Mouse-ear cress).